Consider the following 184-residue polypeptide: ATP synthase subunit b, chloroplastic (184 aa).

The helical transmembrane segment at 27–49 threads the bilayer; the sequence is LATNLINLSVVLGVLIFFGKGVL.

It belongs to the ATPase B chain family. In terms of assembly, F-type ATPases have 2 components, F(1) - the catalytic core - and F(0) - the membrane proton channel. F(1) has five subunits: alpha(3), beta(3), gamma(1), delta(1), epsilon(1). F(0) has four main subunits: a(1), b(1), b'(1) and c(10-14). The alpha and beta chains form an alternating ring which encloses part of the gamma chain. F(1) is attached to F(0) by a central stalk formed by the gamma and epsilon chains, while a peripheral stalk is formed by the delta, b and b' chains.

The protein localises to the plastid. It is found in the chloroplast thylakoid membrane. Functionally, f(1)F(0) ATP synthase produces ATP from ADP in the presence of a proton or sodium gradient. F-type ATPases consist of two structural domains, F(1) containing the extramembraneous catalytic core and F(0) containing the membrane proton channel, linked together by a central stalk and a peripheral stalk. During catalysis, ATP synthesis in the catalytic domain of F(1) is coupled via a rotary mechanism of the central stalk subunits to proton translocation. In terms of biological role, component of the F(0) channel, it forms part of the peripheral stalk, linking F(1) to F(0). In Nicotiana tabacum (Common tobacco), this protein is ATP synthase subunit b, chloroplastic.